Reading from the N-terminus, the 205-residue chain is Ras-related protein Rab-4 (205 aa).

14–22 (GSQSVGKSC) provides a ligand contact to GTP. The Effector region signature appears at 36 to 44 (STHTIGVDF). Residues 62-66 (DTAGQ), 120-123 (NKAD), and 150-152 (SAL) contribute to the GTP site. 2 S-geranylgeranyl cysteine lipidation sites follow: cysteine 203 and cysteine 205. Cysteine 205 is modified (cysteine methyl ester).

It belongs to the small GTPase superfamily. Rab family.

The protein resides in the cell membrane. In terms of biological role, protein transport. Probably involved in vesicular traffic. The protein is Ras-related protein Rab-4 (rab4) of Dictyostelium discoideum (Social amoeba).